Reading from the N-terminus, the 78-residue chain is Cytochrome c oxidase subunit 8, mitochondrial (78 aa).

A mitochondrion-targeting transit peptide spans 1 to 27 (MLCQQMIRTTAKRSSNIMTRPIIMKRS). The Mitochondrial matrix segment spans residues 28–51 (VHFKDGVYENIPFKVKGRKTPYAL). A helical transmembrane segment spans residues 52-73 (SHFGFFAIGFAVPFVACYVQLK). Lysine 74 is a topological domain (mitochondrial intermembrane). Residues 75–78 (SGAF) constitute a propeptide that is removed on maturation.

It belongs to the cytochrome c oxidase VIIc family. Component of the cytochrome c oxidase (complex IV, CIV), a multisubunit enzyme composed of 12 subunits. The complex is composed of a catalytic core of 3 subunits COX1, COX2 and COX3, encoded in the mitochondrial DNA, and 9 supernumerary subunits COX4, COX5A (or COX5B), COX6, COX7, COX8, COX9, COX12, COX13 and COX26, which are encoded in the nuclear genome. The complex exists as a monomer or a dimer and forms supercomplexes (SCs) in the inner mitochondrial membrane with a dimer of ubiquinol-cytochrome c oxidoreductase (cytochrome b-c1 complex, complex III, CIII), resulting in 2 different assemblies (supercomplexes III(2)IV and III(2)IV(2)).

It localises to the mitochondrion inner membrane. It participates in energy metabolism; oxidative phosphorylation. Component of the cytochrome c oxidase, the last enzyme in the mitochondrial electron transport chain which drives oxidative phosphorylation. The respiratory chain contains 3 multisubunit complexes succinate dehydrogenase (complex II, CII), ubiquinol-cytochrome c oxidoreductase (cytochrome b-c1 complex, complex III, CIII) and cytochrome c oxidase (complex IV, CIV), that cooperate to transfer electrons derived from NADH and succinate to molecular oxygen, creating an electrochemical gradient over the inner membrane that drives transmembrane transport and the ATP synthase. Cytochrome c oxidase is the component of the respiratory chain that catalyzes the reduction of oxygen to water. Electrons originating from reduced cytochrome c in the intermembrane space (IMS) are transferred via the dinuclear copper A center (CU(A)) of COX2 and heme A of COX1 to the active site in COX1, a binuclear center (BNC) formed by heme A3 and copper B (CU(B)). The BNC reduces molecular oxygen to 2 water molecules using 4 electrons from cytochrome c in the IMS and 4 protons from the mitochondrial matrix. In Saccharomyces cerevisiae (strain ATCC 204508 / S288c) (Baker's yeast), this protein is Cytochrome c oxidase subunit 8, mitochondrial (COX8).